The sequence spans 678 residues: MTPNEFFSIKYHILAKAELKAYIDKLADYLSQQSYLYHTLDKPIISDSDYDKLFRLLQDLVNDNPQFKPINSVLDRVGGEVLAGFETIKHKKKMTSLANVFSLEELRDFYDKIEYDIELECEPKMDGLAISIFYKNGKFDYAVTRGDGIQGEKVSENVKTIRNVPLKLNTSNPPEELEVRGEIILDKQSFLSLNEYMQTHENKTFANPRNAAAGSIRMLDSKVVAKRPLKLYSYGIGYFSKDFVYPETQFELMQLLQSFGFTISDNMFLAKNFSEVEEYHHKMSHQRADLAYDIDGLVFKINNIKLQDTIGYTARGPKWAIAYKFPAEEVESEVLNVEFQVGRTGAITPVARLKPVAVGGVIVSNATLHNINEIKRKDIRVGDRVIVRRAGDVIPEVVKSLPQYRKSDAQIVEMPTNCPVCDSKIENVNDQAIYRCTGGWHCQAQTTERLKHFVSRKAMDIDKLGAKLIEQLVAANLIKYPADIYKLNFEQLTGLERMAAKSSQNVLDSITKSKEPSLARFIFAIGIKDIGEVSSDALANHFGSLESFRDAKFEELIEINYIGEIIANNIVSFWHDSLNIKIVEEFLAIGIKIQNPVKVEHAYNESFTGKTVVITGSFENYGRTELTQLLKSIGAKVTSSVSKKTDMVICGDNAGSKLTKAQELGVEVILEDNLKDLL.

NAD(+) is bound by residues 47–51 (DSDYD), 96–97 (SL), and Glu-122. The active-site N6-AMP-lysine intermediate is Lys-124. The NAD(+) site is built by Arg-145, Glu-182, Lys-300, and Lys-324. Positions 418, 421, 436, and 442 each coordinate Zn(2+). The BRCT domain maps to 602–678 (AYNESFTGKT…ILEDNLKDLL (77 aa)).

Belongs to the NAD-dependent DNA ligase family. LigA subfamily. Mg(2+) serves as cofactor. It depends on Mn(2+) as a cofactor.

It catalyses the reaction NAD(+) + (deoxyribonucleotide)n-3'-hydroxyl + 5'-phospho-(deoxyribonucleotide)m = (deoxyribonucleotide)n+m + AMP + beta-nicotinamide D-nucleotide.. Functionally, DNA ligase that catalyzes the formation of phosphodiester linkages between 5'-phosphoryl and 3'-hydroxyl groups in double-stranded DNA using NAD as a coenzyme and as the energy source for the reaction. It is essential for DNA replication and repair of damaged DNA. The polypeptide is DNA ligase (Francisella tularensis subsp. holarctica (strain FTNF002-00 / FTA)).